The chain runs to 267 residues: MPTGKLRQKPPYAAIMTNSPVTPSTETQQPKRDALYARFLPQEADAPPVEWLIAEGLTDYEEALAFMEARVQAIREGTASELVWLVEHPPLYTAGTSANAEDLLTPDRFPVFNTGRGGEYTYHGPGQRVAYVMLDLKRRREDVRAFVASLEQWIIETLAAFNIMGERREDRVGVWVVRPEKPRLADGSMCEDKIAAIGIRLRRWVSFHGIAINVEPDLSHYGGIVPCGISEHGVTSLVDLGLPVTMGDVDVALGKAFESVFGPRQTK.

Residues 77 to 265 (GTASELVWLV…AFESVFGPRQ (189 aa)) form the BPL/LPL catalytic domain. Substrate contacts are provided by residues 116–123 (RGGEYTYH), 196–198 (AIG), and 209–211 (GIA). Cysteine 227 serves as the catalytic Acyl-thioester intermediate.

The protein belongs to the LipB family.

It is found in the cytoplasm. The enzyme catalyses octanoyl-[ACP] + L-lysyl-[protein] = N(6)-octanoyl-L-lysyl-[protein] + holo-[ACP] + H(+). The protein operates within protein modification; protein lipoylation via endogenous pathway; protein N(6)-(lipoyl)lysine from octanoyl-[acyl-carrier-protein]: step 1/2. Functionally, catalyzes the transfer of endogenously produced octanoic acid from octanoyl-acyl-carrier-protein onto the lipoyl domains of lipoate-dependent enzymes. Lipoyl-ACP can also act as a substrate although octanoyl-ACP is likely to be the physiological substrate. The chain is Octanoyltransferase from Brucella suis biovar 1 (strain 1330).